Here is a 156-residue protein sequence, read N- to C-terminus: MNLNATLFAQMIVFFVLWWVVARFVWPPLVKALDERSSKIADGLAAAERGKEALALASNEAEQELNKARQEGVQRVAEAEKRAQMSAEEIRANAQAEAARVISQAQQDAAQQVTRAREVLRAEVAVLAVKGAEQILRREVDAKAHGQLLDQLKAEL.

The helical transmembrane segment at 7–27 (LFAQMIVFFVLWWVVARFVWP) threads the bilayer.

It belongs to the ATPase B chain family. As to quaternary structure, F-type ATPases have 2 components, F(1) - the catalytic core - and F(0) - the membrane proton channel. F(1) has five subunits: alpha(3), beta(3), gamma(1), delta(1), epsilon(1). F(0) has three main subunits: a(1), b(2) and c(10-14). The alpha and beta chains form an alternating ring which encloses part of the gamma chain. F(1) is attached to F(0) by a central stalk formed by the gamma and epsilon chains, while a peripheral stalk is formed by the delta and b chains.

Its subcellular location is the cell inner membrane. In terms of biological role, f(1)F(0) ATP synthase produces ATP from ADP in the presence of a proton or sodium gradient. F-type ATPases consist of two structural domains, F(1) containing the extramembraneous catalytic core and F(0) containing the membrane proton channel, linked together by a central stalk and a peripheral stalk. During catalysis, ATP synthesis in the catalytic domain of F(1) is coupled via a rotary mechanism of the central stalk subunits to proton translocation. Component of the F(0) channel, it forms part of the peripheral stalk, linking F(1) to F(0). In Polynucleobacter necessarius subsp. necessarius (strain STIR1), this protein is ATP synthase subunit b.